Consider the following 236-residue polypeptide: 2,3,4,5-tetrahydropyridine-2,6-dicarboxylate N-acetyltransferase (236 aa).

It belongs to the transferase hexapeptide repeat family. DapH subfamily.

It carries out the reaction (S)-2,3,4,5-tetrahydrodipicolinate + acetyl-CoA + H2O = L-2-acetamido-6-oxoheptanedioate + CoA. The protein operates within amino-acid biosynthesis; L-lysine biosynthesis via DAP pathway; LL-2,6-diaminopimelate from (S)-tetrahydrodipicolinate (acetylase route): step 1/3. Catalyzes the transfer of an acetyl group from acetyl-CoA to tetrahydrodipicolinate. In Clostridium botulinum (strain 657 / Type Ba4), this protein is 2,3,4,5-tetrahydropyridine-2,6-dicarboxylate N-acetyltransferase.